Consider the following 263-residue polypeptide: Polyglutamine-binding protein 1 (263 aa).

The WW domain maps to 46–80 (EGLPPSWYKVFDPSCGLPYYWNVDTDLVSWLSPHD). Residue S94 is modified to Phosphoserine. Residues 94 to 263 (SSNADAEEKL…AEASRTKQQD (170 aa)) are disordered. Positions 99–173 (AEEKLDRSHE…DKVDREESKE (75 aa)) are enriched in basic and acidic residues. Repeat copies occupy residues 104-110 (DRSHEKS), 111-117 (DRGHEKS), 118-124 (DRGHEKS), 125-131 (DRSHEKS), 132-138 (ERNHEKS), 139-140 (DR), 141-142 (DR), 143-144 (ER), 150-151 (DR), 152-153 (ER), 154-155 (ER), 156-157 (DR), 158-159 (DR), and 160-161 (DR). Residues 104–138 (DRSHEKSDRGHEKSDRGHEKSDRSHEKSERNHEKS) form a 5 X 7 AA approximate tandem repeats of D-R-[SG]-H-D-K-S region. Residues 139–144 (DRDRER) are 3 X 2 AA tandem repeats of [DE]-R. The tract at residues 150-161 (DRERERDRDRDR) is 6 X 2 AA tandem repeats of [DE]-R. Positions 243 to 253 (YPSPGAVLRAN) are important for interaction with TXNL4A. S245 carries the phosphoserine modification.

In terms of assembly, interacts with POU3F2/Brn-2, ATXN1, TXNL4A, HTT and AR. Interaction with ATXN1 correlates positively with the length of the polyglutamine tract. Interacts with RNA polymerase II large subunit in a phosphorylation-dependent manner. Forms a ternary complex with ATXN1 mutant and phosphorylated RNA polymerase II. Interacts (via C-terminus) with TXNL4A and CD2BP2. Interacts (via WW domain) with ATN1 and SF3B1, and may interact with additional splice factors. Interacts (via WW domain) with WBP11; Leading to reduce interaction between PQBP1 and TXNL4A. Interacts with CAPRIN1. Interacts with DDX1. Interacts with SFPQ. Interacts with KHSRP.

Its subcellular location is the nucleus. The protein localises to the nucleus speckle. It localises to the cytoplasmic granule. In terms of biological role, intrinsically disordered protein that acts as a scaffold, and which is involved in different processes, such as pre-mRNA splicing, transcription regulation, innate immunity and neuron development. Interacts with splicing-related factors via the intrinsically disordered region and regulates alternative splicing of target pre-mRNA species. May suppress the ability of POU3F2 to transactivate the DRD1 gene in a POU3F2 dependent manner. Can activate transcription directly or via association with the transcription machinery. May be involved in ATXN1 mutant-induced cell death. The interaction with ATXN1 mutant reduces levels of phosphorylated RNA polymerase II large subunit. Involved in the assembly of cytoplasmic stress granule, possibly by participating in the transport of neuronal RNA granules. Also acts as an innate immune sensor of infection by retroviruses, by detecting the presence of reverse-transcribed DNA in the cytosol. Directly binds retroviral reverse-transcribed DNA in the cytosol and interacts with CGAS, leading to activate the cGAS-STING signaling pathway, triggering type-I interferon production. The polypeptide is Polyglutamine-binding protein 1 (PQBP1) (Bos taurus (Bovine)).